The sequence spans 176 residues: Conjugal transfer protein TraF (176 aa).

The N-terminal stretch at Met-1–Ala-23 is a signal peptide.

It belongs to the peptidase S26C family.

Its subcellular location is the periplasm. Its function is as follows. Involved in conjugal transfer of the plasmid. This is Conjugal transfer protein TraF (traF) from Agrobacterium tumefaciens (strain 15955).